Reading from the N-terminus, the 357-residue chain is Protein Wnt-9b (357 aa).

Residues 1-22 (MRPPPALALAGLCLLALPAAAA) form the signal peptide. Intrachain disulfides connect Cys-89-Cys-100, Cys-135-Cys-143, Cys-145-Cys-162, Cys-210-Cys-224, Cys-212-Cys-219, Cys-291-Cys-316, Cys-305-Cys-311, Cys-315-Cys-355, Cys-331-Cys-346, Cys-333-Cys-343, and Cys-338-Cys-339. An N-linked (GlcNAc...) asparagine glycan is attached at Asn-99. A lipid anchor (O-palmitoleoyl serine; by PORCN) is attached at Ser-216.

It belongs to the Wnt family. Forms a soluble 1:1 complex with AFM; this prevents oligomerization and is required for prolonged biological activity. The complex with AFM may represent the physiological form in body fluids. Component of the Wnt-Fzd-LRP5-LRP6 signaling complex that contains a WNT protein, a FZD protein and LRP5 or LRP6. Interacts directly in the complex with LRP6. Interacts with PKD1 (via extracellular domain). Palmitoleoylation is required for efficient binding to frizzled receptors. Depalmitoleoylation leads to Wnt signaling pathway inhibition. As to expression, moderately expressed in fetal kidney and adult kidney. Also found in brain.

The protein localises to the secreted. It localises to the extracellular space. The protein resides in the extracellular matrix. Functionally, ligand for members of the frizzled family of seven transmembrane receptors. Functions in the canonical Wnt/beta-catenin signaling pathway. Required for normal embryonic kidney development, and for normal development of the urogenital tract, including uterus and part of the oviduct and the upper vagina in females, and epididymis and vas deferens in males. Activates a signaling cascade in the metanephric mesenchyme that induces tubulogenesis. Acts upstream of WNT4 in the signaling pathways that mediate development of kidney tubules and the Muellerian ducts. Plays a role in cranofacial development and is required for normal fusion of the palate during embryonic development. This Homo sapiens (Human) protein is Protein Wnt-9b (WNT9B).